The primary structure comprises 764 residues: 5-methyltetrahydropteroyltriglutamate--homocysteine methyltransferase (764 aa).

5-methyltetrahydropteroyltri-L-glutamate contacts are provided by residues 19–22 (RELK) and Lys-113. Residues 435-437 (IGS) and Glu-488 contribute to the L-homocysteine site. Residues 435 to 437 (IGS) and Glu-488 each bind L-methionine. 5-methyltetrahydropteroyltri-L-glutamate contacts are provided by residues 519–520 (RC) and Trp-565. Asp-603 lines the L-homocysteine pocket. Asp-603 is an L-methionine binding site. Glu-609 contacts 5-methyltetrahydropteroyltri-L-glutamate. 3 residues coordinate Zn(2+): His-645, Cys-647, and Glu-669. His-698 (proton donor) is an active-site residue. Cys-730 is a Zn(2+) binding site.

It belongs to the vitamin-B12 independent methionine synthase family. Zn(2+) serves as cofactor.

The catalysed reaction is 5-methyltetrahydropteroyltri-L-glutamate + L-homocysteine = tetrahydropteroyltri-L-glutamate + L-methionine. Its pathway is amino-acid biosynthesis; L-methionine biosynthesis via de novo pathway; L-methionine from L-homocysteine (MetE route): step 1/1. Its function is as follows. Catalyzes the transfer of a methyl group from 5-methyltetrahydrofolate to homocysteine resulting in methionine formation. In Desulforamulus reducens (strain ATCC BAA-1160 / DSM 100696 / MI-1) (Desulfotomaculum reducens), this protein is 5-methyltetrahydropteroyltriglutamate--homocysteine methyltransferase.